Here is a 266-residue protein sequence, read N- to C-terminus: Translation initiation factor 2 subunit alpha (266 aa).

The S1 motif domain occupies 12 to 83 (GEILIATVKQ…RKGTVDVSLK (72 aa)).

The protein belongs to the eIF-2-alpha family. Heterotrimer composed of an alpha, a beta and a gamma chain.

Its function is as follows. eIF-2 functions in the early steps of protein synthesis by forming a ternary complex with GTP and initiator tRNA. The chain is Translation initiation factor 2 subunit alpha from Saccharolobus islandicus (strain L.S.2.15 / Lassen #1) (Sulfolobus islandicus).